Consider the following 322-residue polypeptide: RNA pseudouridine synthase 1 (322 aa).

Asp-120 is a catalytic residue.

It belongs to the pseudouridine synthase RluA family.

It catalyses the reaction a uridine in RNA = a pseudouridine in RNA. The polypeptide is RNA pseudouridine synthase 1 (Arabidopsis thaliana (Mouse-ear cress)).